The following is a 377-amino-acid chain: SH2/SH3 adapter protein Nck1 (377 aa).

Alanine 2 carries the N-acetylalanine modification. The 60-residue stretch at 2–61 folds into the SH3 1 domain; that stretch reads AEEVVVVAKFDYVAQQEQELDIKKNERLWLLDDSKSWWRVRNSMNKTGFVPSNYVERKNS. Phosphoserine is present on residues serine 85, serine 91, and serine 96. Tyrosine 105 bears the Phosphotyrosine mark. One can recognise an SH3 2 domain in the interval 106 to 165; it reads DLNMPAFVKFNYMAEREDELSLIKGTKVIVMEKCSDGWWRGSYNGQIGWFPSNYVTEEGD. Serine 166 bears the Phosphoserine mark. In terms of domain architecture, SH3 3 spans 190 to 252; the sequence is QVLHVVQALY…PKNYVTIMQN (63 aa). Residues 282-376 enclose the SH2 domain; the sequence is WYYGKVTRHQ…GEKLYLVKHL (95 aa).

Interacts (via SH2 domain and SH3 domain 2) with EGFR. Interacts with PAK1 and SOS1. Interacts (via SH3 domains) with PKN2. Associates with BLNK, PLCG1, VAV1 and NCK1 in a B-cell antigen receptor-dependent fashion. Interacts with SOCS7. This interaction is required for nuclear import. Part of a complex containing PPP1R15B, PP1 and NCK1. Interacts with RALGPS1. Interacts with CAV2 (tyrosine phosphorylated form). Interacts with ADAM15. Interacts with FASLG. Directly interacts with RASA1. Interacts with isoform 4 of MINK1. Interacts with FLT1 (tyrosine phosphorylated). Interacts with KDR (tyrosine phosphorylated). Interacts (via SH2 domain) with EPHB1; activates the JUN cascade to regulate cell adhesion. Interacts with EPHA2. Interacts (via SH2 domain) with PDGFRB (tyrosine phosphorylated). Interacts with the inactive form of EIF2AK2/PKR. Interacts with PTPN1. Interacts with INSR/insulin receptor (in response to insulin stimulation); this interaction may mediate PTPN1 recruitment leading to INSR dephosphorylation. Interacts with CD3E (via Proline-rich sequence); the interaction is ligand dependent but independent of tyrosine kinase activation. Interacts with EGFR. Interacts with IRS1. In terms of processing, phosphorylated on Ser and Tyr residues. Phosphorylated in response to activation of EGFR and FcERI. Phosphorylated by activated PDGFRB.

The protein resides in the cytoplasm. Its subcellular location is the endoplasmic reticulum. The protein localises to the nucleus. In terms of biological role, adapter protein which associates with tyrosine-phosphorylated growth factor receptors, such as KDR and PDGFRB, or their cellular substrates. Maintains low levels of EIF2S1 phosphorylation by promoting its dephosphorylation by PP1. Plays a role in the DNA damage response, not in the detection of the damage by ATM/ATR, but for efficient activation of downstream effectors, such as that of CHEK2. Plays a role in ELK1-dependent transcriptional activation in response to activated Ras signaling. Modulates the activation of EIF2AK2/PKR by dsRNA. May play a role in cell adhesion and migration through interaction with ephrin receptors. Also acts as an adpater protein for the T cell receptor complex (TCR-CD3E). Upon ligand engagement, is recruited by CD3E and promotes maturation of the immune synapse and T cell activation. This is SH2/SH3 adapter protein Nck1 (Nck1) from Mus musculus (Mouse).